The sequence spans 356 residues: Probable cysteine protease RDL6 (356 aa).

Positions 1–26 are cleaved as a signal peptide; that stretch reads MGFVRPVCMTILFLLIVFVLSAPSSA. A propeptide spans 27–132 (activation peptide); the sequence is MDLPATSGGH…RRYVPLAGDQ (106 aa). 2 N-linked (GlcNAc...) asparagine glycosylation sites follow: asparagine 37 and asparagine 86. Intrachain disulfides connect cysteine 154–cysteine 195, cysteine 188–cysteine 229, and cysteine 288–cysteine 339. Cysteine 157 is an active-site residue. Active-site residues include histidine 294 and asparagine 314.

It belongs to the peptidase C1 family.

Probable thiol protease. The polypeptide is Probable cysteine protease RDL6 (Arabidopsis thaliana (Mouse-ear cress)).